The sequence spans 256 residues: tRNA (guanine-N(1)-)-methyltransferase (256 aa).

S-adenosyl-L-methionine is bound by residues Gly117 and 137–142 (LGDFVL).

The protein belongs to the RNA methyltransferase TrmD family. As to quaternary structure, homodimer.

It is found in the cytoplasm. The enzyme catalyses guanosine(37) in tRNA + S-adenosyl-L-methionine = N(1)-methylguanosine(37) in tRNA + S-adenosyl-L-homocysteine + H(+). Specifically methylates guanosine-37 in various tRNAs. In Methylibium petroleiphilum (strain ATCC BAA-1232 / LMG 22953 / PM1), this protein is tRNA (guanine-N(1)-)-methyltransferase.